Consider the following 256-residue polypeptide: Sec-independent protein translocase protein TatC (256 aa).

6 helical membrane-spanning segments follow: residues 25-45 (VICVVLVFVALVYFSNDIYHF), 77-97 (AIVAIFISVPYLLYQIWAFIA), 117-137 (ILFYCGVAFAYYIVFPLVFSF), 158-178 (FALALFLAFGVCFEVPIAIIL), 195-215 (PYIIVAAFFIGMLLTPPDVFS), and 217-237 (TLLAIPMCLLFELGLLVARFY).

The protein belongs to the TatC family. The Tat system comprises two distinct complexes: a TatABC complex, containing multiple copies of TatA, TatB and TatC subunits, and a separate TatA complex, containing only TatA subunits. Substrates initially bind to the TatABC complex, which probably triggers association of the separate TatA complex to form the active translocon.

The protein localises to the cell inner membrane. Functionally, part of the twin-arginine translocation (Tat) system that transports large folded proteins containing a characteristic twin-arginine motif in their signal peptide across membranes. Together with TatB, TatC is part of a receptor directly interacting with Tat signal peptides. The chain is Sec-independent protein translocase protein TatC from Haemophilus influenzae (strain ATCC 51907 / DSM 11121 / KW20 / Rd).